Reading from the N-terminus, the 166-residue chain is Cofilin-1 (166 aa).

At alanine 2 the chain carries N-acetylalanine. A phosphoserine mark is found at serine 3 and serine 8. The ADF-H domain occupies 4–153; the sequence is GVAVSDGVIK…KDRCTLAEKL (150 aa). Lysine 13 carries the N6-acetyllysine modification. Phosphothreonine is present on threonine 25. Positions 30–34 match the Nuclear localization signal motif; that stretch reads KKRKK. Serine 41 is modified (phosphoserine). Tyrosine 68 is subject to Phosphotyrosine. At lysine 73 the chain carries N6-acetyllysine. Residue lysine 132 forms a Glycyl lysine isopeptide (Lys-Gly) (interchain with G-Cter in SUMO2) linkage. Tyrosine 140 is modified (phosphotyrosine). Lysine 144 carries the N6-acetyllysine modification. Serine 156 is subject to Phosphoserine.

The protein belongs to the actin-binding proteins ADF family. As to quaternary structure, can bind G- and F-actin in a 1:1 ratio of cofilin to actin. It is a major component of intranuclear and cytoplasmic actin rods. Interacts with the subcortical maternal complex (SCMC) via interaction with TLE6 and NLRP5. Interacts with C9orf72. In terms of processing, inactivated by phosphorylation on Ser-3. Phosphorylated on Ser-3 in resting cells. Dephosphorylated by PDXP/chronophin; this restores its activity in promoting actin filament depolymerization. The phosphorylation of Ser-24 may prevent recognition of the nuclear localization signal. Phosphorylated via a ARRB1-RAC1-LIMK1-PAK1 cascade upon active ligand stimulation of atypical chemokine receptor ACKR2.

It is found in the nucleus matrix. The protein resides in the cytoplasm. It localises to the cytoskeleton. The protein localises to the cell projection. Its subcellular location is the ruffle membrane. It is found in the lamellipodium membrane. The protein resides in the lamellipodium. It localises to the growth cone. The protein localises to the axon. Its function is as follows. Binds to F-actin and exhibits pH-sensitive F-actin depolymerizing activity. Important for normal progress through mitosis and normal cytokinesis. In conjunction with the subcortical maternal complex (SCMC), plays an essential role for zygotes to progress beyond the first embryonic cell divisions via regulation of actin dynamics. Required for the centralization of the mitotic spindle and symmetric division of zygotes. Plays a role in the regulation of cell morphology and cytoskeletal organization in epithelial cells. Required for the up-regulation of atypical chemokine receptor ACKR2 from endosomal compartment to cell membrane, increasing its efficiency in chemokine uptake and degradation. Required for neural tube morphogenesis and neural crest cell migration. This is Cofilin-1 (Cfl1) from Rattus norvegicus (Rat).